The following is a 479-amino-acid chain: Poly(A) polymerase catalytic subunit (479 aa).

Catalysis depends on residues aspartate 202 and aspartate 204. Ca(2+) is bound by residues aspartate 202, aspartate 204, and aspartate 253.

It belongs to the poxviridae poly(A) polymerase catalytic subunit family. In terms of assembly, heterodimer of a large (catalytic) subunit and a small (regulatory) subunit.

It catalyses the reaction RNA(n) + ATP = RNA(n)-3'-adenine ribonucleotide + diphosphate. Functionally, polymerase that creates the 3'-poly(A) tail of mRNA's. The polypeptide is Poly(A) polymerase catalytic subunit (OPG063) (Bos taurus (Bovine)).